Consider the following 414-residue polypeptide: Relaxin-3 receptor 2 (414 aa).

Over 1–43 (MATSNSSASLPTLFWVNGSGDSVLSTDGAAMPVQFLVLRIMVA) the chain is Extracellular. Asparagine 5 and asparagine 17 each carry an N-linked (GlcNAc...) asparagine glycan. A helical membrane pass occupies residues 44–64 (LAYGLVGIIGLLGNLAVLWVL). Topologically, residues 65–77 (GNCGQRVPGLSSD) are cytoplasmic. A helical membrane pass occupies residues 78 to 98 (TFVFSLALADLGLALTLPFWA). Residues 99 to 116 (TESAMDFHWPFGSALCKV) are Extracellular-facing. A disulfide bridge connects residues cysteine 114 and cysteine 191. Residues 117–137 (VLTTTVLSIYASTFLITALSI) traverse the membrane as a helical segment. The Cytoplasmic portion of the chain corresponds to 138-155 (ARYWVVAMAVGPGSHLSV). The chain crosses the membrane as a helical span at residues 156-176 (FWARVVTLAVWVAAALVTVPT). Residues 177 to 209 (AIFGAEVELWGVCLCLLRFPSRYWLGAYQLQRV) lie on the Extracellular side of the membrane. Residues 210–230 (VLAFIVPLGVITTSYLLLLAF) form a helical membrane-spanning segment. At 231–255 (LERQQRCRPRQWQDSRVVARSVRVL) the chain is on the cytoplasmic side. The chain crosses the membrane as a helical span at residues 256–276 (VASFALCWVPNHVVTLWEILV). The Extracellular portion of the chain corresponds to 277-293 (RFDLVPWDSTFYTFHTY). Residues 294 to 316 (ILPITTCLAHSNSCLNPVIYCLL) traverse the membrane as a helical segment. Over 317-414 (RREPQQVLVS…SQAAVSPGEV (98 aa)) the chain is Cytoplasmic.

Belongs to the G-protein coupled receptor 1 family. As to expression, detected only in bone marrow.

It localises to the cell membrane. Functionally, high affinity receptor for INSL5. Also acts as a receptor for RLN3/relaxin-3, as well as bradykinin and kallidin. Binding of the ligand inhibit cAMP accumulation. The polypeptide is Relaxin-3 receptor 2 (Rxfp4) (Mus musculus (Mouse)).